The sequence spans 152 residues: Mid1-interacting protein 1A (152 aa).

Positions S87–E105 are enriched in basic and acidic residues. The tract at residues S87–D109 is disordered.

This sequence belongs to the SPOT14 family. In terms of tissue distribution, expressed for a short period in the cells that will produce the enveloping layer (EVL).

It localises to the nucleus. The protein resides in the cytoplasm. Its subcellular location is the cytoskeleton. Functionally, involved in stabilization of microtubules. May play a role in the regulation of lipogenesis. The protein is Mid1-interacting protein 1A (mid1ip1a) of Danio rerio (Zebrafish).